A 424-amino-acid chain; its full sequence is UDP-sugar transporter protein SLC35A5 (424 aa).

Residues 1–8 are Cytoplasmic-facing; sequence MEKQCCSH. A helical membrane pass occupies residues 9-29; that stretch reads PVICSLSTMYTFLLGAIFIAL. The Lumenal portion of the chain corresponds to 30-53; the sequence is SSSRILLVKYSANEENKYDYLPTT. The chain crosses the membrane as a helical span at residues 54 to 74; the sequence is VNVCSELVKLVFCVLVSFCVI. Over 75–93 the chain is Cytoplasmic; the sequence is KKDHQSRNLKYASWKEFSD. A helical transmembrane segment spans residues 94-116; it reads FMKWSIPAFLYFLDNLIVFYVLS. Over 117–119 the chain is Lumenal; that stretch reads YLQ. Residues 120-142 form a helical membrane-spanning segment; that stretch reads PAMAVIFSNFSIITTALLFRIVL. Topologically, residues 143 to 147 are cytoplasmic; sequence KRRLN. A helical transmembrane segment spans residues 148-168; sequence WIQWASLLTLFLSIVALTAGT. The Lumenal segment spans residues 169 to 228; it reads KTLQHNLAGRGFHHDAFFSPSNSCLLFRSECPRKDNCTAKEWTFPEAKWNTTARVFSHIR. N204 carries N-linked (GlcNAc...) asparagine glycosylation. Residues 229–249 traverse the membrane as a helical segment; sequence LGMGHVLIIVQCFISSMANIY. The Cytoplasmic portion of the chain corresponds to 250 to 263; that stretch reads NEKILKEGNQLTES. A helical transmembrane segment spans residues 264-284; it reads IFIQNSKLYFFGILFNGLTLG. Residues 285–303 are Lumenal-facing; the sequence is LQRSNRDQIKNCGFFYGHS. Residues 304-324 form a helical membrane-spanning segment; sequence AFSVALIFVTAFQGLSVAFIL. The Cytoplasmic segment spans residues 325 to 330; it reads KFLDNM. The chain crosses the membrane as a helical span at residues 331–351; sequence FHVLMAQVTTVIITTVSVLVF. Residues 352–354 are Lumenal-facing; sequence DFR. A helical transmembrane segment spans residues 355–375; that stretch reads PSLEFFLEAPSVLLSIFIYNA. Over 376-424 the chain is Cytoplasmic; it reads SKPQVPEYAPRQERIRDLSGNLWERSSGDGEELERLTKPKSDESDEDTF. S394, S416, and S419 each carry phosphoserine. The tract at residues 397-424 is disordered; sequence LWERSSGDGEELERLTKPKSDESDEDTF. A compositionally biased stretch (basic and acidic residues) spans 408–417; the sequence is LERLTKPKSD.

It belongs to the nucleotide-sugar transporter family. SLC35A subfamily. Probably forms homooligomers and heterooligomers with SLC35A1, SLC35A2, SLC35A3 and SLC35A4.

It is found in the golgi apparatus membrane. The catalysed reaction is UMP(out) + UDP-alpha-D-glucuronate(in) = UMP(in) + UDP-alpha-D-glucuronate(out). It catalyses the reaction UMP(out) + UDP-N-acetyl-alpha-D-glucosamine(in) = UMP(in) + UDP-N-acetyl-alpha-D-glucosamine(out). It carries out the reaction UDP-N-acetyl-alpha-D-galactosamine(in) + UMP(out) = UDP-N-acetyl-alpha-D-galactosamine(out) + UMP(in). Probable UDP-sugar:UMP transmembrane antiporter involved in UDP-alpha-D-glucuronate/UDP-GlcA, UDP-GlcNAc/UDP-N-acetyl-alpha-D-glucosamine and UDP-N-acetyl-alpha-D-galactosamine/UDP-GalNAc transport from the cytosol to the lumen of the Golgi. This Homo sapiens (Human) protein is UDP-sugar transporter protein SLC35A5.